Reading from the N-terminus, the 244-residue chain is Uracil phosphoribosyltransferase (244 aa).

Residues K59, R68, and 102-105 (YSKI) contribute to the GTP site. R112 is a 5-phospho-alpha-D-ribose 1-diphosphate binding site. A GTP-binding site is contributed by R129. R137 is a binding site for 5-phospho-alpha-D-ribose 1-diphosphate. Residue R158 coordinates GTP. 5-phospho-alpha-D-ribose 1-diphosphate contacts are provided by residues D164 and 164–172 (DPMCATAGS). Residues I229 and 234–236 (GDF) contribute to the uracil site. D235 contributes to the 5-phospho-alpha-D-ribose 1-diphosphate binding site.

Belongs to the UPRTase family. As to quaternary structure, monomer. Forms homodimers in presence of substrates and homotetramers in the presence of GTP. Mg(2+) serves as cofactor.

It carries out the reaction UMP + diphosphate = 5-phospho-alpha-D-ribose 1-diphosphate + uracil. It participates in pyrimidine metabolism; UMP biosynthesis via salvage pathway; UMP from uracil: step 1/1. With respect to regulation, allosterically activated by GTP. Binding of GTP leads to 5-time activation of the enzyme. Functionally, catalyzes the conversion of uracil and 5-phospho-alpha-D-ribose 1-diphosphate (PRPP) to UMP and diphosphate. This is Uracil phosphoribosyltransferase (uprt) from Toxoplasma gondii.